We begin with the raw amino-acid sequence, 587 residues long: Trihelix transcription factor GTL1 (587 aa).

Gly residues-rich tracts occupy residues 1–10 (MEQGGGGGGN) and 41–54 (GGLGGGGGGGGGGS). The segment at 1–63 (MEQGGGGGGN…SASSSSGNRW (63 aa)) is disordered. Residues 55–119 (ASSSSGNRWP…KCKEKFENVQ (65 aa)) enclose the Myb-like 1 domain. Positions 96–103 (SRKLLELG) match the Nuclear localization signal 1 motif. Low complexity predominate over residues 173 to 194 (SSSPFPVFSQPQPQTQTQPPQT). Residues 173-264 (SSSPFPVFSQ…RKRGNRGGGG (92 aa)) form a disordered region. Residues 201 to 210 (PTPPPLPLPS) are compositionally biased toward pro residues. Over residues 221–232 (SSHSSSTASGMG) the composition is skewed to low complexity. The span at 233 to 242 (SDDDDDDMDV) shows a compositional bias: acidic residues. Positions 285–328 (QRSFLEALEKREQERLDREEAWKRQEMARLAREHEVMSQERAAS) form a coiled coil. The tract at residues 348-435 (QLPPSLSSQP…EQSSLPSSSR (88 aa)) is disordered. The span at 356–366 (QPPPPYQPPPA) shows a compositional bias: pro residues. Low complexity-rich tracts occupy residues 379–395 (AQSQSQQPIMAIPQQQI) and 411–434 (QKQQQQPQQEMVMSSEQSSLPSSS). The Myb-like 2 domain maps to 434 to 492 (SRWPKAEILALINLRSGMEPRYQDNVPKGLLWEEISTSMKRMGYNRNAKRCKEKWENIN). Residues 472 to 479 (MKRMGYNR) carry the Nuclear localization signal 2 motif. The disordered stretch occupies residues 530–587 (GGGSSTSGLPQDQKQSPVTAMKPPQEGLVNVQQTHGSASTEEEEPIEESPQGTEKKTL). Composition is skewed to polar residues over residues 538 to 547 (LPQDQKQSPV) and 559 to 568 (NVQQTHGSAS).

In terms of tissue distribution, mostly expressed in siliques, and, to a lower extent, in growing root hairs, leaves, stems, and flowers. Present in abaxial epidermal cells, predominantly in guard cells, pavement cells, and meristemoids.

The protein resides in the nucleus. Functionally, transcription repressor that binds specific DNA sequence such as GT3 box 5'-GGTAAA-3' in the SDD1 promoter. Negative regulator of water use efficiency (WUE) via the promotion of stomatal density and distribution by the transcription repression of SDD1. Regulates the expression of several cell cycle genes and endoreduplication, especially in trichomes where it prevents ploidy-dependent plant cell growth. Regulates negatively root hair growth by directly binding RSL4 promoter and repressing RSL4 expression. This chain is Trihelix transcription factor GTL1, found in Arabidopsis thaliana (Mouse-ear cress).